The primary structure comprises 550 residues: Cell pattern formation-associated protein STUA (550 aa).

In terms of domain architecture, HTH APSES-type spans 86 to 192; it reads RVTATLWEDE…HNIGALLYHP (107 aa). Residues 120–141 constitute a DNA-binding region (H-T-H motif); sequence GTKLLNVAGMTRGRRDGILKSE. The span at 246-266 shows a compositional bias: polar residues; that stretch reads SLANGPQSLASTPQPLTNGSQ. 4 disordered regions span residues 246 to 277, 371 to 412, 447 to 467, and 527 to 550; these read SLAN…GMLK, HHQP…VKRR, KRRD…DHLN, and APVY…QSFG. Over residues 385-395 the composition is skewed to basic and acidic residues; it reads RGRDEDDDVHR. The nuclear localization domain stretch occupies residues 517–546; it reads TVAASPSYPSAPVYDTGARPPSAISAPRRQ.

The protein belongs to the EFG1/PHD1/stuA family.

The protein resides in the nucleus. In terms of biological role, transcription factor that regulates asexual reproduction. Binds the StuA-response elements (StRE) with the consensus sequence 5'-(A/T)CGCG(T/A)N(A/C)-3' at the promoters of target genes. Differentially regulates the development of macroconidia, microconidia, and chlamydospores. Acts as a positive regulator for the development of macroconidia and as a negative regulator for the development of chlamydospores. Involved in microconidium formation specifically in infected plants. This chain is Cell pattern formation-associated protein STUA, found in Fusarium oxysporum (Fusarium vascular wilt).